A 120-amino-acid chain; its full sequence is Large ribosomal subunit protein bL17 (120 aa).

This sequence belongs to the bacterial ribosomal protein bL17 family. As to quaternary structure, part of the 50S ribosomal subunit. Contacts protein L32.

This Halalkalibacterium halodurans (strain ATCC BAA-125 / DSM 18197 / FERM 7344 / JCM 9153 / C-125) (Bacillus halodurans) protein is Large ribosomal subunit protein bL17.